The primary structure comprises 263 residues: 3'-5' ssDNA/RNA exonuclease TatD (263 aa).

A divalent metal cation-binding residues include E92, H128, and H153.

The protein belongs to the metallo-dependent hydrolases superfamily. TatD-type hydrolase family. TatD subfamily. In terms of assembly, monomer. Mg(2+) serves as cofactor.

It is found in the cytoplasm. In terms of biological role, 3'-5' exonuclease that prefers single-stranded DNA and RNA. May play a role in the H(2)O(2)-induced DNA damage repair. The polypeptide is 3'-5' ssDNA/RNA exonuclease TatD (Rahnella sp. (strain Y9602)).